The chain runs to 133 residues: Small ribosomal subunit protein uS11 (133 aa).

This sequence belongs to the universal ribosomal protein uS11 family. In terms of assembly, part of the 30S ribosomal subunit.

Located on the platform of the 30S subunit. The chain is Small ribosomal subunit protein uS11 from Aeropyrum pernix (strain ATCC 700893 / DSM 11879 / JCM 9820 / NBRC 100138 / K1).